Reading from the N-terminus, the 375-residue chain is 1-deoxy-D-xylulose 5-phosphate reductoisomerase (375 aa).

The NADPH site is built by Thr-12, Gly-13, Ser-14, Ile-15, Asn-39, and Asn-115. 1-deoxy-D-xylulose 5-phosphate is bound at residue Lys-116. An NADPH-binding site is contributed by Glu-117. Asp-141 contributes to the Mn(2+) binding site. 4 residues coordinate 1-deoxy-D-xylulose 5-phosphate: Ser-142, Glu-143, Ser-163, and His-186. Residue Glu-143 coordinates Mn(2+). Residue Gly-192 coordinates NADPH. 1-deoxy-D-xylulose 5-phosphate-binding residues include Ser-199, Asn-204, Lys-205, and Glu-208. Glu-208 provides a ligand contact to Mn(2+).

It belongs to the DXR family. It depends on Mg(2+) as a cofactor. Requires Mn(2+) as cofactor.

It carries out the reaction 2-C-methyl-D-erythritol 4-phosphate + NADP(+) = 1-deoxy-D-xylulose 5-phosphate + NADPH + H(+). Its pathway is isoprenoid biosynthesis; isopentenyl diphosphate biosynthesis via DXP pathway; isopentenyl diphosphate from 1-deoxy-D-xylulose 5-phosphate: step 1/6. Catalyzes the NADPH-dependent rearrangement and reduction of 1-deoxy-D-xylulose-5-phosphate (DXP) to 2-C-methyl-D-erythritol 4-phosphate (MEP). The chain is 1-deoxy-D-xylulose 5-phosphate reductoisomerase from Thermotoga neapolitana (strain ATCC 49049 / DSM 4359 / NBRC 107923 / NS-E).